The chain runs to 448 residues: uncharacterized protein (448 aa).

The span at 187–198 shows a compositional bias: basic and acidic residues; that stretch reads SKGDRGDADDRG. Disordered regions lie at residues 187 to 221, 243 to 270, and 291 to 361; these read SKGD…LPTR, LQVP…GATM, and LSGL…LPNG. The span at 243–261 shows a compositional bias: low complexity; the sequence is LQVPGGTSAAIPSASSTPS. Over residues 307-334 the composition is skewed to basic and acidic residues; that stretch reads FDERGQEVRDPADYEHSNEPDERRADDR.

The protein to M.tuberculosis Rv0025 and Rv0739.

This is an uncharacterized protein from Mycobacterium tuberculosis (strain ATCC 25618 / H37Rv).